A 293-amino-acid chain; its full sequence is Transcription initiation factor IIB 2 (293 aa).

A TFIIB-type zinc finger spans residues 1–31 (MKCPYCKTDNAITYDVEKGMYVCTNCASVIE). The Zn(2+) site is built by Cys-3, Cys-6, Cys-23, and Cys-26. 2 consecutive repeat copies span residues 107-193 (SILN…ANSI) and 204-285 (EYIP…DIVD).

Belongs to the TFIIB family.

Functionally, stabilizes TBP binding to an archaeal box-A promoter. Also responsible for recruiting RNA polymerase II to the pre-initiation complex (DNA-TBP-TFIIB). In Saccharolobus solfataricus (strain ATCC 35092 / DSM 1617 / JCM 11322 / P2) (Sulfolobus solfataricus), this protein is Transcription initiation factor IIB 2.